The chain runs to 186 residues: TATA box-binding protein-like 1 (186 aa).

This sequence belongs to the TBP family. Binds TFIIA and TFIIB.

It is found in the cytoplasm. The protein resides in the nucleus. Part of a specialized transcription system that mediates the transcription of most ribosomal proteins through the 5'-TCT-3' motif which is a core promoter element at these genes. Seems to also mediate the transcription of NF1. Does not bind the TATA box. The sequence is that of TATA box-binding protein-like 1 (TBPL1) from Bos taurus (Bovine).